A 383-amino-acid polypeptide reads, in one-letter code: Na(+)/H(+) antiporter NhaA (383 aa).

11 helical membrane-spanning segments follow: residues 14–34, 47–67, 87–107, 117–137, 146–166, 171–191, 205–225, 252–272, 280–300, 321–341, and 356–376; these read AGGI…NSPL, FGMS…FLLI, IFPA…YVAF, GWAI…ALLG, VFLL…IALF, LSTM…MLNA, AILW…GVVI, VAFG…LEGV, MLPL…IFTF, IFAV…ISSL, and LGIL…LHFS.

It belongs to the NhaA Na(+)/H(+) (TC 2.A.33) antiporter family.

The protein localises to the cell inner membrane. The catalysed reaction is Na(+)(in) + 2 H(+)(out) = Na(+)(out) + 2 H(+)(in). Its function is as follows. Na(+)/H(+) antiporter that extrudes sodium in exchange for external protons. The polypeptide is Na(+)/H(+) antiporter NhaA (Vibrio alginolyticus).